A 444-amino-acid chain; its full sequence is tRNA-2-methylthio-N(6)-dimethylallyladenosine synthase (444 aa).

Residues 7-121 (KTFHVKSFGC…LPELIARAER (115 aa)) enclose the MTTase N-terminal domain. [4Fe-4S] cluster-binding residues include C16, C52, C84, C158, C162, and C165. A Radical SAM core domain is found at 144–376 (GNQRPTAFLT…QALLNEQQQA (233 aa)). The 63-residue stretch at 379–441 (EATVGRTTRL…PNSLGAEPLM (63 aa)) folds into the TRAM domain.

Belongs to the methylthiotransferase family. MiaB subfamily. Monomer. It depends on [4Fe-4S] cluster as a cofactor.

The protein resides in the cytoplasm. The enzyme catalyses N(6)-dimethylallyladenosine(37) in tRNA + (sulfur carrier)-SH + AH2 + 2 S-adenosyl-L-methionine = 2-methylsulfanyl-N(6)-dimethylallyladenosine(37) in tRNA + (sulfur carrier)-H + 5'-deoxyadenosine + L-methionine + A + S-adenosyl-L-homocysteine + 2 H(+). In terms of biological role, catalyzes the methylthiolation of N6-(dimethylallyl)adenosine (i(6)A), leading to the formation of 2-methylthio-N6-(dimethylallyl)adenosine (ms(2)i(6)A) at position 37 in tRNAs that read codons beginning with uridine. This chain is tRNA-2-methylthio-N(6)-dimethylallyladenosine synthase, found in Sphingopyxis alaskensis (strain DSM 13593 / LMG 18877 / RB2256) (Sphingomonas alaskensis).